The primary structure comprises 291 residues: ATP phosphoribosyltransferase 1 (291 aa).

It belongs to the ATP phosphoribosyltransferase family. Long subfamily. The cofactor is Mg(2+).

It is found in the cytoplasm. The catalysed reaction is 1-(5-phospho-beta-D-ribosyl)-ATP + diphosphate = 5-phospho-alpha-D-ribose 1-diphosphate + ATP. The protein operates within amino-acid biosynthesis; L-histidine biosynthesis; L-histidine from 5-phospho-alpha-D-ribose 1-diphosphate: step 1/9. Feedback inhibited by histidine. In terms of biological role, catalyzes the condensation of ATP and 5-phosphoribose 1-diphosphate to form N'-(5'-phosphoribosyl)-ATP (PR-ATP). Has a crucial role in the pathway because the rate of histidine biosynthesis seems to be controlled primarily by regulation of HisG enzymatic activity. This Geobacter sulfurreducens (strain ATCC 51573 / DSM 12127 / PCA) protein is ATP phosphoribosyltransferase 1.